Reading from the N-terminus, the 245-residue chain is 5'-nucleotidase SurE (245 aa).

D8, D9, S39, and N91 together coordinate a divalent metal cation.

Belongs to the SurE nucleotidase family. A divalent metal cation is required as a cofactor.

It localises to the cytoplasm. The catalysed reaction is a ribonucleoside 5'-phosphate + H2O = a ribonucleoside + phosphate. Its function is as follows. Nucleotidase that shows phosphatase activity on nucleoside 5'-monophosphates. This chain is 5'-nucleotidase SurE, found in Psychromonas ingrahamii (strain DSM 17664 / CCUG 51855 / 37).